A 305-amino-acid polypeptide reads, in one-letter code: Glycine--tRNA ligase alpha subunit (305 aa).

Belongs to the class-II aminoacyl-tRNA synthetase family. Tetramer of two alpha and two beta subunits.

It localises to the cytoplasm. It catalyses the reaction tRNA(Gly) + glycine + ATP = glycyl-tRNA(Gly) + AMP + diphosphate. In Ligilactobacillus salivarius (strain UCC118) (Lactobacillus salivarius), this protein is Glycine--tRNA ligase alpha subunit.